The following is a 274-amino-acid chain: MTGFGARLAAAKAQRGPLCVGIDPHPELLRAWDLPTTADGLAAFCDICVEAFAGFAVVKPQVAFFEAYGAAGFAVLERTIAALRSAGVLVLADAKRGDIGTTMAAYAAAWAGDSPLAADAVTASPYLGFGSLRPLLEAAAAHDRGVFVLAATSNPEGATVQRAAFDGRTVAQLVVDQAAVVNRSTNPAGPGYVGVVVGATVLQPPDLSALGGPVLVPGLGVQGGRPEALAGLGGAEPGQLLPAVAREVLRAGPDVAELRGAADRMLDAVAYLDV.

Residue Lys-95 is the Proton donor of the active site.

This sequence belongs to the OMP decarboxylase family. Type 2 subfamily.

It carries out the reaction orotidine 5'-phosphate + H(+) = UMP + CO2. It functions in the pathway pyrimidine metabolism; UMP biosynthesis via de novo pathway; UMP from orotate: step 2/2. This is Orotidine 5'-phosphate decarboxylase from Mycobacterium avium (strain 104).